A 338-amino-acid polypeptide reads, in one-letter code: MGYNYVSLIVTILLVVITSPVVFGNDAAPIPENKGRIEQWFNTNVKQNGRGHFKTITEAINSVRAGNTRRVIIKIGPGVYKEKVTIDRSKPFITLYGHPNAMPVLTFDGTAAQYGTVDSATLIVLSDYFMAVNIILKNSAPMPDGKRKGAQALSMRISGNKAAFYNCKFYGYQDTICDDTGNHFFKDCYIEGTFDFIFGSGRSLYLGTQLNVVGDGIRVITAHAGKSAAEKSGYSFVHCKVTGTGTGIYLGRSWMSHPKVVYAYTDMSSVVNPSGWQENREAGRDKTVFYGEYKCTGTGSHKEKRVKYTQDIDDIEAKYFISLGYIQGSSWLLPPPSF.

The first 24 residues, 1 to 24 (MGYNYVSLIVTILLVVITSPVVFG), serve as a signal peptide directing secretion. Thr116 and Gln151 together coordinate substrate. Asp174 (proton donor) is an active-site residue. Catalysis depends on Asp195, which acts as the Nucleophile. Arg252 serves as a coordination point for substrate.

It belongs to the pectinesterase family.

It localises to the secreted. The protein resides in the cell wall. The catalysed reaction is [(1-&gt;4)-alpha-D-galacturonosyl methyl ester](n) + n H2O = [(1-&gt;4)-alpha-D-galacturonosyl](n) + n methanol + n H(+). Its pathway is glycan metabolism; pectin degradation; 2-dehydro-3-deoxy-D-gluconate from pectin: step 1/5. In terms of biological role, acts in the modification of cell walls via demethylesterification of cell wall pectin. The chain is Putative pectinesterase 63 (PME63) from Arabidopsis thaliana (Mouse-ear cress).